A 334-amino-acid chain; its full sequence is 6-phosphogluconolactonase (334 aa).

Belongs to the cycloisomerase 2 family.

The enzyme catalyses 6-phospho-D-glucono-1,5-lactone + H2O = 6-phospho-D-gluconate + H(+). It functions in the pathway carbohydrate degradation; pentose phosphate pathway; D-ribulose 5-phosphate from D-glucose 6-phosphate (oxidative stage): step 2/3. Catalyzes the hydrolysis of 6-phosphogluconolactone to 6-phosphogluconate. This Yersinia pseudotuberculosis serotype IB (strain PB1/+) protein is 6-phosphogluconolactonase.